A 310-amino-acid chain; its full sequence is p-hydroxybenzoic acid efflux pump subunit AaeA (310 aa).

A helical transmembrane segment spans residues 12 to 32; the sequence is AITLVLVILAFIAIFRAWVYY.

Belongs to the membrane fusion protein (MFP) (TC 8.A.1) family.

It localises to the cell inner membrane. In terms of biological role, forms an efflux pump with AaeB. The polypeptide is p-hydroxybenzoic acid efflux pump subunit AaeA (Salmonella schwarzengrund (strain CVM19633)).